The sequence spans 214 residues: MRSIMEVETLKRLALMGANKEQVSLSSSIFATSLGMSPQTAARRLSALEEDGYITRVVTPEGQKVRITEKGITCLKSEYRDYCSIFEDGGAPVMRGKVVTGLGEGQYYISLDGYRNQFNDKLGFDPYPGTLNVRLTEPFIPAEHEAVVIAGFKGENRTFGGCKCYPVRIKGVRAAIIRPDRTSYPPNLIEIIAPIKLRESLGLRDGDEVEVTLE.

Positions 1-91 (MRSIMEVETL…YCSIFEDGGA (91 aa)) are H-T-H motif-like. Residues 92-214 (PVMRGKVVTG…DGDEVEVTLE (123 aa)) form a riboflavin kinase region. 101-106 (GLGEGQ) contacts CDP. Mg(2+) contacts are provided by Thr-130 and Asn-132. Residues Thr-182 and Glu-190 each coordinate FMN. 195–198 (IKLR) contributes to the CDP binding site.

This sequence belongs to the archaeal riboflavin kinase family. It depends on Mg(2+) as a cofactor.

The catalysed reaction is riboflavin + CTP = CDP + FMN + H(+). It participates in cofactor biosynthesis; FMN biosynthesis; FMN from riboflavin (CTP route): step 1/1. Functionally, catalyzes the CTP-dependent phosphorylation of riboflavin (vitamin B2) to form flavin mononucleotide (FMN). This chain is Riboflavin kinase (ribK), found in Methanocella arvoryzae (strain DSM 22066 / NBRC 105507 / MRE50).